Consider the following 308-residue polypeptide: Homoserine kinase (308 aa).

Residue 95-105 (PQSRGLGSSAA) coordinates ATP.

Belongs to the GHMP kinase family. Homoserine kinase subfamily.

The protein localises to the cytoplasm. It catalyses the reaction L-homoserine + ATP = O-phospho-L-homoserine + ADP + H(+). Its pathway is amino-acid biosynthesis; L-threonine biosynthesis; L-threonine from L-aspartate: step 4/5. Catalyzes the ATP-dependent phosphorylation of L-homoserine to L-homoserine phosphate. In Corynebacterium diphtheriae (strain ATCC 700971 / NCTC 13129 / Biotype gravis), this protein is Homoserine kinase.